The chain runs to 579 residues: Acetolactate synthase (579 aa).

Residue Glu61 participates in thiamine diphosphate binding. Residues Arg163, 274–295 (HGTAYANFAVMELDFVIAVGVR), and 317–336 (DIDPAEVGKNRSTDVPIVGD) contribute to the FAD site. Residues 408 to 487 (QHQMWAGQFV…VKVIILNNGW (80 aa)) form a thiamine pyrophosphate binding region. Residues Asp458 and Asn485 each coordinate Mg(2+).

This sequence belongs to the TPP enzyme family. It depends on Mg(2+) as a cofactor. Thiamine diphosphate serves as cofactor.

It catalyses the reaction 2 pyruvate + H(+) = (2S)-2-acetolactate + CO2. It participates in amino-acid biosynthesis; L-isoleucine biosynthesis; L-isoleucine from 2-oxobutanoate: step 1/4. It functions in the pathway amino-acid biosynthesis; L-valine biosynthesis; L-valine from pyruvate: step 1/4. This is Acetolactate synthase (ilvY) from Arthrospira platensis (Spirulina platensis).